We begin with the raw amino-acid sequence, 296 residues long: Ribosomal RNA small subunit methyltransferase H (296 aa).

Residues 30–32, Asp49, Phe77, Asp95, and Gln102 contribute to the S-adenosyl-L-methionine site; that span reads GGH.

Belongs to the methyltransferase superfamily. RsmH family.

The protein localises to the cytoplasm. The catalysed reaction is cytidine(1402) in 16S rRNA + S-adenosyl-L-methionine = N(4)-methylcytidine(1402) in 16S rRNA + S-adenosyl-L-homocysteine + H(+). In terms of biological role, specifically methylates the N4 position of cytidine in position 1402 (C1402) of 16S rRNA. The polypeptide is Ribosomal RNA small subunit methyltransferase H (Hydrogenobaculum sp. (strain Y04AAS1)).